Reading from the N-terminus, the 509-residue chain is MSLMLAALILTVAFVICSLTGFTQRKLSGGRLPKCLPSFPLIGSLLSLRSDLPPHLLFQKLQKTYGNLFSLMMGPHYAVVINNHQHAKEVLLKKGKIFAGRPSMVTTDLLSRGGKDIAFGKYGPAWKFHRKLVLSALHLFGDGSAGIEKMICQEATSMCSTFERLNNAAHDMMPDVTRAVTNVICLLCFNSTYEKEDPEFQTMRKYSQGIVNTVAKDSLIDIFPWLQFFPNENLHTLKQCIATRDSILQKKFEDHKANYSSDSANDLFNILLKAKMNAENNNSSVHEAGLTDDHMVMTVADIFGAGVETSSTAFAWMIIYLIHHPEVQKKIQEEIDSNIGFERTPKMSDKGNMNFLNATIHEILRIQPVSPLLIPHVALADSSIGDYTIPKGTRVIINLWAIHHDEKEWKNPDAFDPGRFLDEDGKYVCSSSESYLPFGAGTRVCLGEMLARMELFLFTSWILQRFTVQVPPGYPPPDKEGKFGIVLQPLKFKVQLKLRKAWENRGLHD.

C445 contacts heme.

Belongs to the cytochrome P450 family. It depends on heme as a cofactor.

It is found in the membrane. The enzyme catalyses a C21-steroid + reduced [NADPH--hemoprotein reductase] + O2 = a 17alpha-hydroxy-C21-steroid + oxidized [NADPH--hemoprotein reductase] + H2O + H(+). The catalysed reaction is 17alpha-hydroxyprogesterone + reduced [NADPH--hemoprotein reductase] + O2 = androst-4-ene-3,17-dione + acetate + oxidized [NADPH--hemoprotein reductase] + H2O + 2 H(+). It catalyses the reaction 17alpha-hydroxypregnenolone + reduced [NADPH--hemoprotein reductase] + O2 = 3beta-hydroxyandrost-5-en-17-one + acetate + oxidized [NADPH--hemoprotein reductase] + H2O + 2 H(+). It functions in the pathway lipid metabolism; steroid biosynthesis. In terms of biological role, conversion of pregnenolone and progesterone to their 17-alpha-hydroxylated products and subsequently to dehydroepiandrosterone (DHEA) and androstenedione. Catalyzes both the 17-alpha-hydroxylation and the 17,20-lyase reaction. This is Steroid 17-alpha-hydroxylase/17,20 lyase (CYP17A1) from Squalus acanthias (Spiny dogfish).